A 159-amino-acid chain; its full sequence is Endoribonuclease YbeY (159 aa).

The Zn(2+) site is built by histidine 114, histidine 118, and histidine 124.

Belongs to the endoribonuclease YbeY family. The cofactor is Zn(2+).

The protein localises to the cytoplasm. In terms of biological role, single strand-specific metallo-endoribonuclease involved in late-stage 70S ribosome quality control and in maturation of the 3' terminus of the 16S rRNA. The polypeptide is Endoribonuclease YbeY (Pectobacterium carotovorum subsp. carotovorum (strain PC1)).